Here is a 135-residue protein sequence, read N- to C-terminus: Peptide methionine sulfoxide reductase MsrB (135 aa).

One can recognise a MsrB domain in the interval 9-131; that stretch reads DDYWRSKLTD…NSASIQFEEE (123 aa). Zn(2+) contacts are provided by Cys-48, Cys-51, Cys-97, and Cys-100. Cys-120 functions as the Nucleophile in the catalytic mechanism.

It belongs to the MsrB Met sulfoxide reductase family. Zn(2+) serves as cofactor.

It carries out the reaction L-methionyl-[protein] + [thioredoxin]-disulfide + H2O = L-methionyl-(R)-S-oxide-[protein] + [thioredoxin]-dithiol. This chain is Peptide methionine sulfoxide reductase MsrB, found in Teredinibacter turnerae (strain ATCC 39867 / T7901).